The primary structure comprises 451 residues: tRNA modification GTPase MnmE (451 aa).

The (6S)-5-formyl-5,6,7,8-tetrahydrofolate site is built by arginine 25, glutamate 87, and arginine 127. The TrmE-type G domain maps to glycine 222–glycine 374. Asparagine 232 is a K(+) binding site. Residues asparagine 232–serine 237, threonine 251–threonine 257, and aspartate 276–glycine 279 contribute to the GTP site. A Mg(2+)-binding site is contributed by serine 236. 3 residues coordinate K(+): threonine 251, leucine 253, and threonine 256. Threonine 257 contacts Mg(2+). Lysine 451 is a binding site for (6S)-5-formyl-5,6,7,8-tetrahydrofolate.

This sequence belongs to the TRAFAC class TrmE-Era-EngA-EngB-Septin-like GTPase superfamily. TrmE GTPase family. In terms of assembly, homodimer. Heterotetramer of two MnmE and two MnmG subunits. The cofactor is K(+).

The protein localises to the cytoplasm. Its function is as follows. Exhibits a very high intrinsic GTPase hydrolysis rate. Involved in the addition of a carboxymethylaminomethyl (cmnm) group at the wobble position (U34) of certain tRNAs, forming tRNA-cmnm(5)s(2)U34. The polypeptide is tRNA modification GTPase MnmE (Synechococcus sp. (strain CC9902)).